The chain runs to 391 residues: 3-ketoacyl-CoA thiolase (391 aa).

Cys95 functions as the Acyl-thioester intermediate in the catalytic mechanism. Residues His347 and Cys377 each act as proton acceptor in the active site.

This sequence belongs to the thiolase-like superfamily. Thiolase family. As to quaternary structure, heterotetramer of two alpha chains (FadB) and two beta chains (FadA).

Its subcellular location is the cytoplasm. The catalysed reaction is an acyl-CoA + acetyl-CoA = a 3-oxoacyl-CoA + CoA. Its pathway is lipid metabolism; fatty acid beta-oxidation. Its function is as follows. Catalyzes the final step of fatty acid oxidation in which acetyl-CoA is released and the CoA ester of a fatty acid two carbons shorter is formed. This is 3-ketoacyl-CoA thiolase from Pseudomonas putida (strain ATCC 47054 / DSM 6125 / CFBP 8728 / NCIMB 11950 / KT2440).